The sequence spans 638 residues: Chaperone protein HtpG (638 aa).

The a; substrate-binding stretch occupies residues Met1–Arg346. The b stretch occupies residues Glu347–Lys563. Residues Leu564 to Lys638 form a c region.

This sequence belongs to the heat shock protein 90 family. In terms of assembly, homodimer.

It localises to the cytoplasm. Its function is as follows. Molecular chaperone. Has ATPase activity. The polypeptide is Chaperone protein HtpG (Shewanella sediminis (strain HAW-EB3)).